The chain runs to 79 residues: Small ribosomal subunit protein bS18 (79 aa).

It belongs to the bacterial ribosomal protein bS18 family. Part of the 30S ribosomal subunit. Forms a tight heterodimer with protein bS6.

Its function is as follows. Binds as a heterodimer with protein bS6 to the central domain of the 16S rRNA, where it helps stabilize the platform of the 30S subunit. The polypeptide is Small ribosomal subunit protein bS18 (Streptococcus agalactiae serotype Ia (strain ATCC 27591 / A909 / CDC SS700)).